Consider the following 374-residue polypeptide: Alcohol dehydrogenase class-3 (374 aa).

Ser-2 is modified (N-acetylserine). 7 residues coordinate Zn(2+): Cys-45, His-67, Cys-97, Cys-100, Cys-103, Cys-111, and Cys-174. Lys-233 is subject to N6-succinyllysine. Position 247 is a phosphoserine (Ser-247). At Lys-315 the chain carries N6-succinyllysine. Phosphoserine occurs at positions 324 and 351.

It belongs to the zinc-containing alcohol dehydrogenase family. Class-III subfamily. As to quaternary structure, homodimer. Zn(2+) is required as a cofactor.

The protein localises to the cytoplasm. It catalyses the reaction a primary alcohol + NAD(+) = an aldehyde + NADH + H(+). It carries out the reaction a secondary alcohol + NAD(+) = a ketone + NADH + H(+). The enzyme catalyses S-(hydroxymethyl)glutathione + NADP(+) = S-formylglutathione + NADPH + H(+). The catalysed reaction is S-(hydroxymethyl)glutathione + NAD(+) = S-formylglutathione + NADH + H(+). It catalyses the reaction 20-oxo-(5Z,8Z,11Z,14Z)-eicosatetraenoate + NAD(+) + H2O = (5Z,8Z,11Z,14Z)-eicosatetraenedioate + NADH + 2 H(+). It carries out the reaction 20-hydroxy-(5Z,8Z,11Z,14Z)-eicosatetraenoate + NAD(+) = 20-oxo-(5Z,8Z,11Z,14Z)-eicosatetraenoate + NADH + H(+). The enzyme catalyses S-nitrosoglutathione + NADH + H(+) = S-(hydroxysulfenamide)glutathione + NAD(+). Catalyzes the oxidation of long-chain primary alcohols and the oxidation of S-(hydroxymethyl) glutathione. Also oxidizes long chain omega-hydroxy fatty acids, such as 20-HETE, producing both the intermediate aldehyde, 20-oxoarachidonate and the end product, a dicarboxylic acid, (5Z,8Z,11Z,14Z)-eicosatetraenedioate. Class-III ADH is remarkably ineffective in oxidizing ethanol. Required for clearance of cellular formaldehyde, a cytotoxic and carcinogenic metabolite that induces DNA damage. Also acts as a S-nitroso-glutathione reductase by catalyzing the NADH-dependent reduction of S-nitrosoglutathione, thereby regulating protein S-nitrosylation. The polypeptide is Alcohol dehydrogenase class-3 (Equus caballus (Horse)).